A 162-amino-acid chain; its full sequence is HTH-type transcriptional regulator IscR (162 aa).

Residues 2–131 (RLTSKGRYAV…NNITLGELVN (130 aa)) form the HTH rrf2-type domain. Positions 28-51 (LADISERQGISLSYLEQLFSRLRK) form a DNA-binding region, H-T-H motif. [2Fe-2S] cluster contacts are provided by Cys-92, Cys-98, and Cys-104.

It depends on [2Fe-2S] cluster as a cofactor.

Its function is as follows. Regulates the transcription of several operons and genes involved in the biogenesis of Fe-S clusters and Fe-S-containing proteins. In Shigella sonnei (strain Ss046), this protein is HTH-type transcriptional regulator IscR.